A 277-amino-acid polypeptide reads, in one-letter code: Small ribosomal subunit protein uS5 (277 aa).

A disordered region spans residues 18–40 (AAGRPSWSWQRPGERARTPGRKA). Residues 29-40 (PGERARTPGRKA) show a composition bias toward basic and acidic residues. One can recognise an S5 DRBM domain in the interval 87 to 150 (LKDEVLKIMP…ILAKLSIIPV (64 aa)).

This sequence belongs to the universal ribosomal protein uS5 family. Component of the small ribosomal subunit.

It is found in the cytoplasm. The protein resides in the nucleus. The protein localises to the nucleolus. Its function is as follows. Component of the ribosome, a large ribonucleoprotein complex responsible for the synthesis of proteins in the cell. The small ribosomal subunit (SSU) binds messenger RNAs (mRNAs) and translates the encoded message by selecting cognate aminoacyl-transfer RNA (tRNA) molecules. The large subunit (LSU) contains the ribosomal catalytic site termed the peptidyl transferase center (PTC), which catalyzes the formation of peptide bonds, thereby polymerizing the amino acids delivered by tRNAs into a polypeptide chain. The nascent polypeptides leave the ribosome through a tunnel in the LSU and interact with protein factors that function in enzymatic processing, targeting, and the membrane insertion of nascent chains at the exit of the ribosomal tunnel. Plays a role in the assembly and function of the 40S ribosomal subunit. Mutations in this protein affects the control of translational fidelity. Involved in nucleolar processing of pre-18S ribosomal RNA and ribosome assembly. This Ictalurus punctatus (Channel catfish) protein is Small ribosomal subunit protein uS5 (rps2).